A 363-amino-acid polypeptide reads, in one-letter code: 5-formaminoimidazole-4-carboxamide-1-(beta)-D-ribofuranosyl 5'-monophosphate synthetase (363 aa).

The 5-amino-1-(5-phospho-beta-D-ribosyl)imidazole-4-carboxamide site is built by H29 and S96. One can recognise an ATP-grasp domain in the interval 118–350 (RDILRWESER…MGRRVAREIR (233 aa)). Residues 148–210 (PEEI…TNFC) and E232 each bind ATP. N260 is a 5-amino-1-(5-phospho-beta-D-ribosyl)imidazole-4-carboxamide binding site. Mg(2+) is bound by residues Q299 and E312.

This sequence belongs to the phosphohexose mutase family. The cofactor is Mg(2+). Mn(2+) is required as a cofactor.

It catalyses the reaction 5-amino-1-(5-phospho-beta-D-ribosyl)imidazole-4-carboxamide + formate + ATP = 5-formamido-1-(5-phospho-D-ribosyl)imidazole-4-carboxamide + ADP + phosphate. The protein operates within purine metabolism; IMP biosynthesis via de novo pathway; 5-formamido-1-(5-phospho-D-ribosyl)imidazole-4-carboxamide from 5-amino-1-(5-phospho-D-ribosyl)imidazole-4-carboxamide (formate route): step 1/1. Catalyzes the ATP- and formate-dependent formylation of 5-aminoimidazole-4-carboxamide-1-beta-d-ribofuranosyl 5'-monophosphate (AICAR) to 5-formaminoimidazole-4-carboxamide-1-beta-d-ribofuranosyl 5'-monophosphate (FAICAR) in the absence of folates. The sequence is that of 5-formaminoimidazole-4-carboxamide-1-(beta)-D-ribofuranosyl 5'-monophosphate synthetase from Methanothermobacter thermautotrophicus (strain ATCC 29096 / DSM 1053 / JCM 10044 / NBRC 100330 / Delta H) (Methanobacterium thermoautotrophicum).